A 212-amino-acid polypeptide reads, in one-letter code: 3-demethoxyubiquinol 3-hydroxylase (212 aa).

A disordered region spans residues 21–42 (SRMSRPLPVPQESAVTEAAPEL). Fe cation contacts are provided by Glu-61, Glu-91, His-94, Glu-143, Glu-175, and His-178.

Belongs to the COQ7 family. It depends on Fe cation as a cofactor.

The protein resides in the cell membrane. The catalysed reaction is a 5-methoxy-2-methyl-3-(all-trans-polyprenyl)benzene-1,4-diol + AH2 + O2 = a 3-demethylubiquinol + A + H2O. Its pathway is cofactor biosynthesis; ubiquinone biosynthesis. Functionally, catalyzes the hydroxylation of 2-nonaprenyl-3-methyl-6-methoxy-1,4-benzoquinol during ubiquinone biosynthesis. This Paraburkholderia xenovorans (strain LB400) protein is 3-demethoxyubiquinol 3-hydroxylase.